The primary structure comprises 297 residues: MPELPEVEVTRRGLLPHVVGRRIADVIVRHRGLRWPVEPELEARLTGRIIGRIERRGKYLLLECLPPADATRAGTGEDAAPGWLLVHLGMTGTLRVYPAPPAPGAHDHLDLLLAAGPDTAEAEPVVLRFRDPRRFGAILWTPLAESDLPGHPLLSRLGIEPFDPRFDGAWLHRGMRGRSMAIKQALLAGDVVVGVGNIYCSESLFRAGIRPTTQAGRLSLARCEKLAVAVRETLAEAIARGGSTLRDFVGSDGSSGYFQLDCFVYDRAGEPCRICGTPIRQILQGQRSTFYCPHCQH.

P2 serves as the catalytic Schiff-base intermediate with DNA. The active-site Proton donor is the E3. Catalysis depends on K58, which acts as the Proton donor; for beta-elimination activity. The DNA site is built by H106, R133, and R178. The segment at 263 to 297 adopts an FPG-type zinc-finger fold; sequence FVYDRAGEPCRICGTPIRQILQGQRSTFYCPHCQH. The active-site Proton donor; for delta-elimination activity is the R287.

Belongs to the FPG family. As to quaternary structure, monomer. The cofactor is Zn(2+).

The catalysed reaction is Hydrolysis of DNA containing ring-opened 7-methylguanine residues, releasing 2,6-diamino-4-hydroxy-5-(N-methyl)formamidopyrimidine.. It catalyses the reaction 2'-deoxyribonucleotide-(2'-deoxyribose 5'-phosphate)-2'-deoxyribonucleotide-DNA = a 3'-end 2'-deoxyribonucleotide-(2,3-dehydro-2,3-deoxyribose 5'-phosphate)-DNA + a 5'-end 5'-phospho-2'-deoxyribonucleoside-DNA + H(+). Its function is as follows. Involved in base excision repair of DNA damaged by oxidation or by mutagenic agents. Acts as a DNA glycosylase that recognizes and removes damaged bases. Has a preference for oxidized purines, such as 7,8-dihydro-8-oxoguanine (8-oxoG). Has AP (apurinic/apyrimidinic) lyase activity and introduces nicks in the DNA strand. Cleaves the DNA backbone by beta-delta elimination to generate a single-strand break at the site of the removed base with both 3'- and 5'-phosphates. The sequence is that of Formamidopyrimidine-DNA glycosylase from Cupriavidus metallidurans (strain ATCC 43123 / DSM 2839 / NBRC 102507 / CH34) (Ralstonia metallidurans).